The following is a 324-amino-acid chain: NADH-dependent D-xylose reductase (324 aa).

Tyr-54 (proton donor) is an active-site residue. A substrate-binding site is contributed by His-116. 220–286 (SSFGPQSFLE…SNSPDRMAQN (67 aa)) serves as a coordination point for NAD(+).

It belongs to the aldo/keto reductase family.

The enzyme catalyses xylitol + NAD(+) = D-xylose + NADH + H(+). The catalysed reaction is xylitol + NADP(+) = D-xylose + NADPH + H(+). It functions in the pathway carbohydrate metabolism; D-xylose degradation. Its function is as follows. Reduces D-xylose into xylitol. Preferentially utilizes NADH as a cosubstrate. In Candida parapsilosis (Yeast), this protein is NADH-dependent D-xylose reductase (XYL1).